We begin with the raw amino-acid sequence, 295 residues long: Protein gurken (295 aa).

The N-terminal stretch at 1–26 (MMQIPFTRIFKVIFVLSTIVAVTDCC) is a signal peptide. Topologically, residues 27-247 (SSRILLLREH…TAQRKVRMAH (221 aa)) are extracellular. 2 disordered regions span residues 78–111 (EASA…SIAA) and 124–175 (TDTW…NDKE). Residues 124 to 139 (TDTWLASESSTPITDS) show a composition bias toward polar residues. Low complexity-rich tracts occupy residues 140-152 (ETVT…THTG) and 159-171 (SSSS…TPSP). The EGF-like domain occupies 179 to 224 (QMLPCSEAYNTSFCLNGGHCFQHPMVNNTVFHSCLCVNDYDGERCA). Cystine bridges form between Cys-183/Cys-198, Cys-192/Cys-212, and Cys-214/Cys-223. Residues Asn-188 and Asn-205 are each glycosylated (N-linked (GlcNAc...) asparagine). The tract at residues 215–245 (VNDYDGERCAYKSWNGDYIYSPPTAQRKVRM) is interaction with cni. Residues 248–268 (IVFSFPVLLMLSSLYVLFAAV) traverse the membrane as a helical segment. Topologically, residues 269–295 (FMLRNVPDYRRKQQQLHLHKQRFFVRC) are cytoplasmic.

Interacts with cni. Expressed in nurse cells and oocyte up to oogenesis stage 7. Specifically accumulates in dorsal anterior corner of the oocyte during stages 9/10, at later stages expression is seen as an anterior ring. In stage 10 ovaries, it is concentrated between the oocyte nucleus and the adjacent oolemma. During vitellogenesis stage it can be detected at the oocyte surface, especially on the microvilli. It is also found at the microvilli covering the apical surface of the follicular epithelium and within follicle cells.

Its subcellular location is the cell membrane. In terms of biological role, critical for defining the anterior-posterior and dorsal-ventral axes of the egg. May signal directly to dorsal follicle cells through the receptor torpedo (top). During oogenesis this signaling pathway instructs follicle cells to follow a dorsal pathway of development rather than the default ventral pathway. This Drosophila melanogaster (Fruit fly) protein is Protein gurken (grk).